Reading from the N-terminus, the 184-residue chain is Adenine phosphoribosyltransferase (184 aa).

It belongs to the purine/pyrimidine phosphoribosyltransferase family. Homodimer.

The protein resides in the cytoplasm. It carries out the reaction AMP + diphosphate = 5-phospho-alpha-D-ribose 1-diphosphate + adenine. Its pathway is purine metabolism; AMP biosynthesis via salvage pathway; AMP from adenine: step 1/1. Catalyzes a salvage reaction resulting in the formation of AMP, that is energically less costly than de novo synthesis. The sequence is that of Adenine phosphoribosyltransferase from Mycobacterium marinum (strain ATCC BAA-535 / M).